The primary structure comprises 87 residues: uncharacterized protein (87 aa).

Residues 48-70 (GIYIPHTLIFWMCPRAMGTAITF) traverse the membrane as a helical segment.

It localises to the host membrane. This is an uncharacterized protein from Gallid herpesvirus 2 (strain Chicken/Md5/ATCC VR-987) (GaHV-2).